The sequence spans 186 residues: Ribosome-recycling factor (186 aa).

It belongs to the RRF family.

It localises to the cytoplasm. Responsible for the release of ribosomes from messenger RNA at the termination of protein biosynthesis. May increase the efficiency of translation by recycling ribosomes from one round of translation to another. The polypeptide is Ribosome-recycling factor (Rickettsia felis (strain ATCC VR-1525 / URRWXCal2) (Rickettsia azadi)).